The sequence spans 316 residues: Ribose-phosphate pyrophosphokinase (316 aa).

ATP-binding positions include 40-42 (DGE) and 99-100 (RQ). Mg(2+) is bound by residues histidine 133 and aspartate 174. Residue lysine 197 is part of the active site. D-ribose 5-phosphate-binding positions include arginine 199, aspartate 223, and 227–231 (DTAGT).

The protein belongs to the ribose-phosphate pyrophosphokinase family. Class I subfamily. In terms of assembly, homohexamer. It depends on Mg(2+) as a cofactor.

The protein localises to the cytoplasm. The enzyme catalyses D-ribose 5-phosphate + ATP = 5-phospho-alpha-D-ribose 1-diphosphate + AMP + H(+). The protein operates within metabolic intermediate biosynthesis; 5-phospho-alpha-D-ribose 1-diphosphate biosynthesis; 5-phospho-alpha-D-ribose 1-diphosphate from D-ribose 5-phosphate (route I): step 1/1. Involved in the biosynthesis of the central metabolite phospho-alpha-D-ribosyl-1-pyrophosphate (PRPP) via the transfer of pyrophosphoryl group from ATP to 1-hydroxyl of ribose-5-phosphate (Rib-5-P). The protein is Ribose-phosphate pyrophosphokinase of Fusobacterium nucleatum subsp. nucleatum (strain ATCC 25586 / DSM 15643 / BCRC 10681 / CIP 101130 / JCM 8532 / KCTC 2640 / LMG 13131 / VPI 4355).